Consider the following 92-residue polypeptide: MPRSLKKGPFIDFHLLKKIEEIKQTGKKKLIRTWSRRSTIFPDMIGMTISVHNGKQHIPIFIGDEMVGHKLGEFVPTRTYRGHSADKKIKKR.

The protein belongs to the universal ribosomal protein uS19 family.

Functionally, protein S19 forms a complex with S13 that binds strongly to the 16S ribosomal RNA. The polypeptide is Small ribosomal subunit protein uS19 (Wigglesworthia glossinidia brevipalpis).